Consider the following 272-residue polypeptide: Formamidopyrimidine-DNA glycosylase (272 aa).

P2 functions as the Schiff-base intermediate with DNA in the catalytic mechanism. E3 functions as the Proton donor in the catalytic mechanism. Residue K58 is the Proton donor; for beta-elimination activity of the active site. The DNA site is built by H94, R112, and R153. The FPG-type zinc-finger motif lies at 238–272 (FVYDRAGEPCRVCGAPIRQIVQGQRSTYFCPNCQR). R262 functions as the Proton donor; for delta-elimination activity in the catalytic mechanism.

This sequence belongs to the FPG family. As to quaternary structure, monomer. Zn(2+) serves as cofactor.

The catalysed reaction is Hydrolysis of DNA containing ring-opened 7-methylguanine residues, releasing 2,6-diamino-4-hydroxy-5-(N-methyl)formamidopyrimidine.. It carries out the reaction 2'-deoxyribonucleotide-(2'-deoxyribose 5'-phosphate)-2'-deoxyribonucleotide-DNA = a 3'-end 2'-deoxyribonucleotide-(2,3-dehydro-2,3-deoxyribose 5'-phosphate)-DNA + a 5'-end 5'-phospho-2'-deoxyribonucleoside-DNA + H(+). In terms of biological role, involved in base excision repair of DNA damaged by oxidation or by mutagenic agents. Acts as a DNA glycosylase that recognizes and removes damaged bases. Has a preference for oxidized purines, such as 7,8-dihydro-8-oxoguanine (8-oxoG). Has AP (apurinic/apyrimidinic) lyase activity and introduces nicks in the DNA strand. Cleaves the DNA backbone by beta-delta elimination to generate a single-strand break at the site of the removed base with both 3'- and 5'-phosphates. In Burkholderia mallei (strain NCTC 10229), this protein is Formamidopyrimidine-DNA glycosylase.